The primary structure comprises 21 residues: Glutathione S-transferase 1 (21 aa).

This sequence belongs to the GST superfamily. Phi family.

It catalyses the reaction RX + glutathione = an S-substituted glutathione + a halide anion + H(+). Conjugation of reduced glutathione to a wide number of exogenous and endogenous hydrophobic electrophiles. In plants, may have a detoxification role against certain herbicides. This chain is Glutathione S-transferase 1, found in Populus euphratica (Euphrates poplar).